Here is an 86-residue protein sequence, read N- to C-terminus: Small ribosomal subunit protein bS20 (86 aa).

Belongs to the bacterial ribosomal protein bS20 family.

Functionally, binds directly to 16S ribosomal RNA. In Rhodococcus opacus (strain B4), this protein is Small ribosomal subunit protein bS20.